A 43-amino-acid polypeptide reads, in one-letter code: Thymosin beta-12 (43 aa).

Composition is skewed to basic and acidic residues over residues 1 to 25 (MSDK…ETQE) and 33 to 43 (ETIEQEKQATA). The segment at 1–43 (MSDKPDLAEVSNFDKTKLKKTETQEKNPLPTKETIEQEKQATA) is disordered. Position 2 is an N-acetylserine (Ser2).

It belongs to the thymosin beta family.

It localises to the cytoplasm. The protein localises to the cytoskeleton. Plays an important role in the organization of the cytoskeleton. Binds to and sequesters actin monomers (G actin) and therefore inhibits actin polymerization. This chain is Thymosin beta-12, found in Oncorhynchus mykiss (Rainbow trout).